Reading from the N-terminus, the 160-residue chain is Phosphoribosyl-ATP pyrophosphatase (160 aa).

The protein belongs to the PRA-PH family.

The protein resides in the cytoplasm. The enzyme catalyses 1-(5-phospho-beta-D-ribosyl)-ATP + H2O = 1-(5-phospho-beta-D-ribosyl)-5'-AMP + diphosphate + H(+). It functions in the pathway amino-acid biosynthesis; L-histidine biosynthesis; L-histidine from 5-phospho-alpha-D-ribose 1-diphosphate: step 2/9. This Granulibacter bethesdensis (strain ATCC BAA-1260 / CGDNIH1) protein is Phosphoribosyl-ATP pyrophosphatase.